A 311-amino-acid chain; its full sequence is Putative RNA-binding protein R05D3.8 (311 aa).

An RRM domain is found at 155–235 (KRLFVSYFPL…RRAVLKESVK (81 aa)). Polar residues predominate over residues 261–270 (TPSRPVTSVH). Residues 261 to 311 (TPSRPVTSVHASSSASSNHYDPSAAAGYAPLYHQPPESDPLSQCGYGPRKW) are disordered.

The protein is Putative RNA-binding protein R05D3.8 of Caenorhabditis elegans.